We begin with the raw amino-acid sequence, 568 residues long: Archaeosine synthase subunit alpha (568 aa).

Positions tyrosine 496–arginine 565 constitute a PUA domain.

This sequence belongs to the archaeosine synthase type 1 family. In terms of assembly, forms a robust complex with the archaeosine synthase beta subunit RaSEA, likely an alpha(2)beta(2) heterotetrameric structure. Formation of this complex highly increases lysine transfer activity.

It catalyses the reaction 7-cyano-7-carbaguanosine(15) in tRNA + L-lysine = 7-N-[(5S)-5-amino-5-carboxypentyl]formamidino-7-deazaguanosine(15) in tRNA. Its pathway is tRNA modification; archaeosine-tRNA biosynthesis. In terms of biological role, functions in the biosynthesis of archaeosine, a modified nucleoside present in the dihydrouridine loop (D-loop) of archaeal tRNAs. Catalyzes the addition of L-lysine to the cyano group of 7-cyano-7-deazaguanine (preQ0)-modified tRNAs at position 15, to generate q0kN15-tRNA, a q0N lysine adduct identified as 7-N-[(5S)-5-amino-5-carboxypentyl]formamidino-7-deazaguanosine. This chain is Archaeosine synthase subunit alpha, found in Thermococcus kodakarensis (strain ATCC BAA-918 / JCM 12380 / KOD1) (Pyrococcus kodakaraensis (strain KOD1)).